The sequence spans 963 residues: Kinesin-1 heavy chain (963 aa).

N-acetylalanine is present on Ala2. The Kinesin motor domain maps to 8 to 325 (NIKVMCRFRP…LLFGQRAKTI (318 aa)). 85–92 (GQTSSGKT) contacts ATP. Lys213 participates in a covalent cross-link: Glycyl lysine isopeptide (Lys-Gly) (interchain with G-Cter in SUMO2). The stretch at 329-914 (VCVNVELTAE…AVRSKNMARR (586 aa)) forms a coiled coil. Positions 908–963 (SKNMARRGHSAQIAKPIRPGQHPAASPTHPSAIRGGGAFVQNSQPVAVRGGGGKQV) are disordered. The tract at residues 915–963 (GHSAQIAKPIRPGQHPAASPTHPSAIRGGGAFVQNSQPVAVRGGGGKQV) is globular. Ser933 bears the Phosphoserine mark. At Arg956 the chain carries Omega-N-methylarginine.

This sequence belongs to the TRAFAC class myosin-kinesin ATPase superfamily. Kinesin family. Kinesin subfamily. In terms of assembly, oligomer composed of two heavy chains and two light chains. Interacts with GRIP1 and PPP1R42. Interacts with SYBU. Interacts with JAKMIP1. Interacts with PLEKHM2. Interacts with ECPAS. Interacts with ZFYVE27. Found in a complex with OGT, RHOT1, RHOT2 and TRAK1. Interacts with APP (via cytoplasmic domain).

It is found in the cytoplasm. It localises to the cytoskeleton. Its subcellular location is the cytolytic granule membrane. The protein resides in the lysosome membrane. Functionally, microtubule-dependent motor required for normal distribution of mitochondria and lysosomes. Can induce formation of neurite-like membrane protrusions in non-neuronal cells in a ZFYVE27-dependent manner. Regulates centrosome and nuclear positioning during mitotic entry. During the G2 phase of the cell cycle in a BICD2-dependent manner, antagonizes dynein function and drives the separation of nuclei and centrosomes. Required for anterograde axonal transportation of MAPK8IP3/JIP3 which is essential for MAPK8IP3/JIP3 function in axon elongation. Through binding with PLEKHM2 and ARL8B, directs lysosome movement toward microtubule plus ends. Involved in NK cell-mediated cytotoxicity. Drives the polarization of cytolytic granules and microtubule-organizing centers (MTOCs) toward the immune synapse between effector NK lymphocytes and target cells. In Homo sapiens (Human), this protein is Kinesin-1 heavy chain.